The sequence spans 894 residues: DNA mismatch repair protein MutS (894 aa).

Position 629–636 (629–636) interacts with ATP; that stretch reads GPNMGGKS. Residues 819-840 form a disordered region; sequence TPTPQLDLFAPPPHPDTSDDDE.

Belongs to the DNA mismatch repair MutS family.

Its function is as follows. This protein is involved in the repair of mismatches in DNA. It is possible that it carries out the mismatch recognition step. This protein has a weak ATPase activity. The protein is DNA mismatch repair protein MutS of Cupriavidus pinatubonensis (strain JMP 134 / LMG 1197) (Cupriavidus necator (strain JMP 134)).